The primary structure comprises 245 residues: Chlorophyll a-b binding protein 1B-21, chloroplastic (245 aa).

The transit peptide at 1 to 44 (MASSSGLRSCSAVGVPSLLAPSSRSGRSGLPFCAYATTSGRVTM) directs the protein to the chloroplast. Chlorophyll b is bound at residue Trp-48. Residues Phe-68, Glu-87, and His-90 each contribute to the chlorophyll a site. Arg-92 contacts chlorophyll b. A helical membrane pass occupies residues 93-113 (WAMLCVPGVLVPEALGLGNWV). Leu-129 lines the chlorophyll a pocket. The chain crosses the membrane as a helical span at residues 132–152 (PVPWGNLPTILAIEFLAIAFA). The chlorophyll b site is built by Val-133, Glu-153, and Arg-156. 6 residues coordinate chlorophyll a: Lys-190, Glu-191, Asn-194, Arg-196, Gln-208, and His-224.

This sequence belongs to the light-harvesting chlorophyll a/b-binding (LHC) protein family. In terms of assembly, the LHC complex consists of chlorophyll a-b binding proteins. Binds at least 14 chlorophylls (8 Chl-a and 6 Chl-b) and carotenoids such as lutein and neoxanthin. serves as cofactor. Photoregulated by reversible phosphorylation of its threonine residues.

The protein localises to the plastid. The protein resides in the chloroplast thylakoid membrane. The light-harvesting complex (LHC) functions as a light receptor, it captures and delivers excitation energy to photosystems with which it is closely associated. This chain is Chlorophyll a-b binding protein 1B-21, chloroplastic (LHC Ib-21), found in Hordeum vulgare (Barley).